The sequence spans 938 residues: Isoleucine--tRNA ligase (938 aa).

The short motif at 58 to 68 (PYANGSIHIGH) is the 'HIGH' region element. Glu561 is a binding site for L-isoleucyl-5'-AMP. The 'KMSKS' region motif lies at 602–606 (KMSKS). Residue Lys605 coordinates ATP. Zn(2+) contacts are provided by Cys901, Cys904, Cys921, and Cys924.

The protein belongs to the class-I aminoacyl-tRNA synthetase family. IleS type 1 subfamily. As to quaternary structure, monomer. The cofactor is Zn(2+).

The protein localises to the cytoplasm. The enzyme catalyses tRNA(Ile) + L-isoleucine + ATP = L-isoleucyl-tRNA(Ile) + AMP + diphosphate. Catalyzes the attachment of isoleucine to tRNA(Ile). As IleRS can inadvertently accommodate and process structurally similar amino acids such as valine, to avoid such errors it has two additional distinct tRNA(Ile)-dependent editing activities. One activity is designated as 'pretransfer' editing and involves the hydrolysis of activated Val-AMP. The other activity is designated 'posttransfer' editing and involves deacylation of mischarged Val-tRNA(Ile). This is Isoleucine--tRNA ligase from Erwinia tasmaniensis (strain DSM 17950 / CFBP 7177 / CIP 109463 / NCPPB 4357 / Et1/99).